Here is a 134-residue protein sequence, read N- to C-terminus: Lymphocyte antigen 6S (134 aa).

A signal peptide spans 1 to 26; sequence MSSLQAMKTLSLVLLVALLSMERAQG. The UPAR/Ly6 domain maps to 28–76; the sequence is RCYRCLAVLEGASCSVVSCPFLDGVCVSQKVSVFGSKVRGENKLSLLSC. Intrachain disulfides connect Cys29-Cys53, Cys32-Cys41, Cys76-Cys98, and Cys99-Cys104. A lipid anchor (GPI-anchor amidated asparagine) is attached at Asn105. Residues 106-134 constitute a propeptide, removed in mature form; the sequence is AVVLAASSPWALCVQLLLSLGSVFLWALL.

Its subcellular location is the cell membrane. The protein is Lymphocyte antigen 6S of Homo sapiens (Human).